We begin with the raw amino-acid sequence, 379 residues long: Tryptophan 2,3-dioxygenase (379 aa).

Substrate-binding positions include 57–61 (FIITH) and Arg128. Residue His312 participates in heme binding. Thr327 provides a ligand contact to substrate.

The protein belongs to the tryptophan 2,3-dioxygenase family. As to quaternary structure, homotetramer. Dimer of dimers. Heme serves as cofactor.

It catalyses the reaction L-tryptophan + O2 = N-formyl-L-kynurenine. The protein operates within amino-acid degradation; L-tryptophan degradation via kynurenine pathway; L-kynurenine from L-tryptophan: step 1/2. It participates in pigment biosynthesis; ommochrome biosynthesis. Heme-dependent dioxygenase that catalyzes the oxidative cleavage of the L-tryptophan (L-Trp) pyrrole ring and converts L-tryptophan to N-formyl-L-kynurenine. Catalyzes the oxidative cleavage of the indole moiety. The polypeptide is Tryptophan 2,3-dioxygenase (Drosophila yakuba (Fruit fly)).